We begin with the raw amino-acid sequence, 519 residues long: 2,3-bisphosphoglycerate-independent phosphoglycerate mutase (519 aa).

The Mn(2+) site is built by D9 and S60. S60 serves as the catalytic Phosphoserine intermediate. Basic and acidic residues predominate over residues D76–A91. The tract at residues D76–F102 is disordered. Substrate is bound by residues H134, R163–D164, R195, R201, R267–R270, and K341. The Mn(2+) site is built by D408, H412, D449, H450, and H466.

Belongs to the BPG-independent phosphoglycerate mutase family. Mn(2+) serves as cofactor.

It carries out the reaction (2R)-2-phosphoglycerate = (2R)-3-phosphoglycerate. Its pathway is carbohydrate degradation; glycolysis; pyruvate from D-glyceraldehyde 3-phosphate: step 3/5. Catalyzes the interconversion of 2-phosphoglycerate and 3-phosphoglycerate. The polypeptide is 2,3-bisphosphoglycerate-independent phosphoglycerate mutase (Haloarcula marismortui (strain ATCC 43049 / DSM 3752 / JCM 8966 / VKM B-1809) (Halobacterium marismortui)).